Reading from the N-terminus, the 150-residue chain is Large ribosomal subunit protein bL9 (150 aa).

Belongs to the bacterial ribosomal protein bL9 family.

Its function is as follows. Binds to the 23S rRNA. This Delftia acidovorans (strain DSM 14801 / SPH-1) protein is Large ribosomal subunit protein bL9.